We begin with the raw amino-acid sequence, 201 residues long: Glutathione peroxidase 1 (201 aa).

At serine 32 the chain carries Phosphoserine. Residue selenocysteine 47 is part of the active site. Selenocysteine 47 is a non-standard amino acid (selenocysteine). N6-acetyllysine; alternate is present on residues lysine 86, lysine 112, and lysine 146. An N6-succinyllysine; alternate mark is found at lysine 86, lysine 112, and lysine 146. Phosphoserine occurs at positions 195 and 199.

Belongs to the glutathione peroxidase family. Homotetramer. Interacts with MIEN1. During periods of oxidative stress, Sec-47 may react with a superoxide radical, irreversibly lose hydroselenide and be converted to dehydroalanine.

It is found in the cytoplasm. It carries out the reaction 2 glutathione + H2O2 = glutathione disulfide + 2 H2O. It catalyses the reaction (12S)-hydroperoxy-(5Z,8Z,10E,14Z)-eicosatetraenoate + 2 glutathione = (12S)-hydroxy-(5Z,8Z,10E,14Z)-eicosatetraenoate + glutathione disulfide + H2O. Functionally, protects the hemoglobin in erythrocytes from oxidative breakdown. In platelets, plays a crucial role of glutathione peroxidase in the arachidonic acid metabolism. The polypeptide is Glutathione peroxidase 1 (GPX1) (Hylobates lar (Lar gibbon)).